The primary structure comprises 312 residues: Pre-mRNA-splicing factor 38A (312 aa).

Positions M1–P179 are N-terminal protein interaction domain. Residues R180–E312 are disordered. Residues L184–D201 show a composition bias toward acidic residues. Over residues E202–R223 the composition is skewed to basic and acidic residues. 2 stretches are compositionally biased toward basic residues: residues R224–S294 and K301–E312.

It belongs to the PRP38 family. As to quaternary structure, component of the spliceosome B complex.

Its subcellular location is the nucleus. In terms of biological role, involved in pre-mRNA splicing as a component of the spliceosome. The chain is Pre-mRNA-splicing factor 38A (prpf38a) from Xenopus tropicalis (Western clawed frog).